The sequence spans 393 residues: Formate-dependent phosphoribosylglycinamide formyltransferase (393 aa).

N(1)-(5-phospho-beta-D-ribosyl)glycinamide-binding positions include 22-23 (EL) and E82. Residues R114, K155, 160 to 165 (SSGKGQ), 195 to 198 (EGFI), and E203 each bind ATP. The region spanning 119–308 (RLAAEELDLP…QFALHARAIL (190 aa)) is the ATP-grasp domain. Residues E267 and E279 each coordinate Mg(2+). N(1)-(5-phospho-beta-D-ribosyl)glycinamide-binding positions include D286, K356, and 363–364 (RR).

The protein belongs to the PurK/PurT family. As to quaternary structure, homodimer.

It carries out the reaction N(1)-(5-phospho-beta-D-ribosyl)glycinamide + formate + ATP = N(2)-formyl-N(1)-(5-phospho-beta-D-ribosyl)glycinamide + ADP + phosphate + H(+). It participates in purine metabolism; IMP biosynthesis via de novo pathway; N(2)-formyl-N(1)-(5-phospho-D-ribosyl)glycinamide from N(1)-(5-phospho-D-ribosyl)glycinamide (formate route): step 1/1. In terms of biological role, involved in the de novo purine biosynthesis. Catalyzes the transfer of formate to 5-phospho-ribosyl-glycinamide (GAR), producing 5-phospho-ribosyl-N-formylglycinamide (FGAR). Formate is provided by PurU via hydrolysis of 10-formyl-tetrahydrofolate. This Pseudomonas putida (strain GB-1) protein is Formate-dependent phosphoribosylglycinamide formyltransferase.